The chain runs to 213 residues: MQLSLAPCLACLLVHAAFVAVESQGWQAFKNDATEIIPGLREYPEPPQELENNQTMNRAENGGRPPHHPYDTKDVSEYSCRELHYTRFVTDGPCRSAKPVTELVCSGQCGPARLLPNAIGRVKWWRPNGPDFRCIPDRYRAQRVQLLCPGGAAPRSRKVRLVASCKCKRLTRFHNQSELKDFGPETARPQKGRKPRPRARGAKANQAELENAY.

Positions 1–28 (MQLSLAPCLACLLVHAAFVAVESQGWQA) are cleaved as a signal peptide. The N-linked (GlcNAc...) asparagine glycan is linked to asparagine 53. Cystine bridges form between cysteine 80-cysteine 134, cysteine 94-cysteine 148, cysteine 105-cysteine 165, and cysteine 109-cysteine 167. Positions 82 to 172 (ELHYTRFVTD…ASCKCKRLTR (91 aa)) constitute a CTCK domain. The N-linked (GlcNAc...) asparagine glycan is linked to asparagine 175. Residues 178–213 (ELKDFGPETARPQKGRKPRPRARGAKANQAELENAY) form a disordered region. Over residues 190-201 (QKGRKPRPRARG) the composition is skewed to basic residues.

Belongs to the sclerostin family. In terms of assembly, interacts with LRP4 (via the extracellular domain); the interaction facilitates the inhibition of Wnt signaling. Interacts with LRP5 (via the first two YWTD-EGF repeat domains); the interaction inhibits Wnt-mediated signaling. Interacts with LRP6.

It localises to the secreted. Functionally, negative regulator of bone growth that acts through inhibition of Wnt signaling and bone formation. This Rattus norvegicus (Rat) protein is Sclerostin.